We begin with the raw amino-acid sequence, 216 residues long: Cytidylate kinase (216 aa).

7 to 15 is an ATP binding site; that stretch reads GPAGTGKST.

It belongs to the cytidylate kinase family. Type 1 subfamily.

Its subcellular location is the cytoplasm. It catalyses the reaction CMP + ATP = CDP + ADP. The enzyme catalyses dCMP + ATP = dCDP + ADP. In Chlamydia muridarum (strain MoPn / Nigg), this protein is Cytidylate kinase.